Consider the following 440-residue polypeptide: Enolase (440 aa).

Glutamine 163 is a binding site for (2R)-2-phosphoglycerate. Glutamate 205 acts as the Proton donor in catalysis. 3 residues coordinate Mg(2+): aspartate 242, glutamate 288, and aspartate 315. Residues lysine 340, arginine 369, serine 370, and lysine 391 each coordinate (2R)-2-phosphoglycerate. The Proton acceptor role is filled by lysine 340.

This sequence belongs to the enolase family. It depends on Mg(2+) as a cofactor.

The protein resides in the cytoplasm. It is found in the secreted. Its subcellular location is the cell surface. It carries out the reaction (2R)-2-phosphoglycerate = phosphoenolpyruvate + H2O. It participates in carbohydrate degradation; glycolysis; pyruvate from D-glyceraldehyde 3-phosphate: step 4/5. Its function is as follows. Catalyzes the reversible conversion of 2-phosphoglycerate (2-PG) into phosphoenolpyruvate (PEP). It is essential for the degradation of carbohydrates via glycolysis. The protein is Enolase of Pediococcus pentosaceus (strain ATCC 25745 / CCUG 21536 / LMG 10740 / 183-1w).